The following is a 394-amino-acid chain: Quinolinate synthase (394 aa).

Iminosuccinate contacts are provided by histidine 67 and serine 84. Cysteine 131 provides a ligand contact to [4Fe-4S] cluster. Residues 163-165 (YMN) and serine 184 contribute to the iminosuccinate site. Cysteine 254 contacts [4Fe-4S] cluster. Iminosuccinate-binding positions include 280-282 (HPE) and threonine 297. Cysteine 346 provides a ligand contact to [4Fe-4S] cluster.

This sequence belongs to the quinolinate synthase family. Type 3 subfamily. The cofactor is [4Fe-4S] cluster.

It is found in the cytoplasm. It catalyses the reaction iminosuccinate + dihydroxyacetone phosphate = quinolinate + phosphate + 2 H2O + H(+). It functions in the pathway cofactor biosynthesis; NAD(+) biosynthesis; quinolinate from iminoaspartate: step 1/1. Catalyzes the condensation of iminoaspartate with dihydroxyacetone phosphate to form quinolinate. The protein is Quinolinate synthase of Streptomyces coelicolor (strain ATCC BAA-471 / A3(2) / M145).